The following is a 450-amino-acid chain: Probable 1,4-beta-D-glucan cellobiohydrolase C (450 aa).

The first 19 residues, M1–A19, serve as a signal peptide directing secretion. A CBM1 domain is found at Q20–I55. 2 disulfides stabilise this stretch: C27/C44 and C38/C54. The thr-rich linker stretch occupies residues T59–T90. Residues T63 to V89 form a disordered region. Residues A91–F450 are catalytic. Residue D180 is part of the active site. Cystine bridges form between C181/C240 and C372/C419. Catalysis depends on D226, which acts as the Proton donor. The active-site Nucleophile is the D405. A glycan (N-linked (GlcNAc...) asparagine) is linked at N409.

This sequence belongs to the glycosyl hydrolase 6 (cellulase B) family.

The protein localises to the secreted. It catalyses the reaction Hydrolysis of (1-&gt;4)-beta-D-glucosidic linkages in cellulose and cellotetraose, releasing cellobiose from the non-reducing ends of the chains.. Functionally, the biological conversion of cellulose to glucose generally requires three types of hydrolytic enzymes: (1) Endoglucanases which cut internal beta-1,4-glucosidic bonds; (2) Exocellobiohydrolases that cut the disaccharide cellobiose from the non-reducing end of the cellulose polymer chain; (3) Beta-1,4-glucosidases which hydrolyze the cellobiose and other short cello-oligosaccharides to glucose. This chain is Probable 1,4-beta-D-glucan cellobiohydrolase C (cbhC), found in Neosartorya fischeri (strain ATCC 1020 / DSM 3700 / CBS 544.65 / FGSC A1164 / JCM 1740 / NRRL 181 / WB 181) (Aspergillus fischerianus).